A 144-amino-acid polypeptide reads, in one-letter code: Putative acetyltransferase SAOUHSC_00995 (144 aa).

Positions 1–141 (MFSKVNNQKM…EHIEMTKKLT (141 aa)) constitute an N-acetyltransferase domain. Residues 71–73 (VAV), glycine 79, and 112–114 (PFY) each bind CoA.

This sequence belongs to the UPF0039 (ElaA) family.

In terms of biological role, could catalyze the transfer of an acetyl group from acetyl coenzyme A (AcCoA) to an acceptor substrate and release both CoA and the acetylated product. The sequence is that of Putative acetyltransferase SAOUHSC_00995 from Staphylococcus aureus (strain NCTC 8325 / PS 47).